The chain runs to 671 residues: DNA ligase (671 aa).

NAD(+)-binding positions include 32 to 36 (DAEYD), 81 to 82 (SL), and Glu113. Catalysis depends on Lys115, which acts as the N6-AMP-lysine intermediate. The NAD(+) site is built by Arg136, Glu173, Lys290, and Lys314. Residues Cys408, Cys411, Cys426, and Cys432 each contribute to the Zn(2+) site. The 79-residue stretch at 593–671 (EIDSPFAGKT…EAEMIRLLGA (79 aa)) folds into the BRCT domain.

The protein belongs to the NAD-dependent DNA ligase family. LigA subfamily. Mg(2+) serves as cofactor. Requires Mn(2+) as cofactor.

The enzyme catalyses NAD(+) + (deoxyribonucleotide)n-3'-hydroxyl + 5'-phospho-(deoxyribonucleotide)m = (deoxyribonucleotide)n+m + AMP + beta-nicotinamide D-nucleotide.. DNA ligase that catalyzes the formation of phosphodiester linkages between 5'-phosphoryl and 3'-hydroxyl groups in double-stranded DNA using NAD as a coenzyme and as the energy source for the reaction. It is essential for DNA replication and repair of damaged DNA. The polypeptide is DNA ligase (Salmonella paratyphi C (strain RKS4594)).